Here is a 603-residue protein sequence, read N- to C-terminus: Ribosome-inactivating protein PMRIPt (603 aa).

The first 39 residues, 1–39 (MRVVAGILYIVVMAICGLGIQGGTLQDYPSVYFQDSTLQ), serve as a signal peptide directing secretion. N74 and N168 each carry an N-linked (GlcNAc...) asparagine glycan. E208 is a catalytic residue. Intrachain disulfides connect C297-C335, C351-C370, and C392-C409. Ricin B-type lectin domains are found at residues 338–466 (GEPT…VGDD) and 467–593 (VEPI…WMTM). One copy of the 1-alpha repeat lies at 348–388 (DGLCMDVRNESNNDGIPIQLWPCGAQRNQQWTFHTDGTIQS). Residues N356 and N408 are each glycosylated (N-linked (GlcNAc...) asparagine). One copy of the 1-beta repeat lies at 389 to 430 (MGKCMTSNGYHPGDYVMIFNCSTAPVPDATKWVVSIDGSITN). One copy of the 1-gamma repeat lies at 433-466 (SGLVLTAPQAAQTTILLVVRNTHSAKQGRSVGDD). A 2-alpha repeat occupies 478 to 516 (KYMCLQGNNENNTRVWLEDCAVDRPQQWWALYSDGTIRV). 2 disulfide bridges follow: C481-C497 and C523-C540. N488 carries an N-linked (GlcNAc...) asparagine glycan. Residues 520–558 (RSLCVTSDGHSSRDAIIILTCDGGINQRLVFNTDGTILN) form a 2-beta repeat. The 2-gamma repeat unit spans residues 561–597 (AQLVMDVRQSNVALRQIILYQPTGNPNQQWMTMITRT).

Belongs to the ribosome-inactivating protein family. Type 2 RIP subfamily. In terms of assembly, tetramer of four pairs of disulfide bound A-B chains. In terms of processing, the precursor is processed in two chains, A and B, that are linked by a disulfide bond. Post-translationally, glycosylated. In terms of tissue distribution, expressed in rhizome and more abundantly in leaves (at protein level).

The enzyme catalyses Endohydrolysis of the N-glycosidic bond at one specific adenosine on the 28S rRNA.. Strongly inhibited by asialofetuin and asialomucin. GalNAc-specific agglutinin. Behaves as a type-2 ribosome-inactivating protein. Inhibits mammalian ribosomes. The A chain is responsible for inhibiting protein synthesis through the catalytic inactivation of 60S ribosomal subunits by removing adenine from position 4,324 of 28S rRNA. The B chain binds to cell receptors and probably facilitates the entry into the cell of the A chain; B chains are also responsible for cell agglutination (lectin activity). Involved in plant defense against insects. Has very low cytotoxic activity against the human tumor cell lines CEM and Molt4. In Polygonatum multiflorum (Solomon's seal), this protein is Ribosome-inactivating protein PMRIPt.